The primary structure comprises 57 residues: UPF0391 membrane protein RPC_3278 (57 aa).

Transmembrane regions (helical) follow at residues 4-24 (WVITFLVVALIAGILGFGGIA) and 30-50 (IAKIIFFIAVVLFLVSAVVGL).

This sequence belongs to the UPF0391 family.

It localises to the cell membrane. In Rhodopseudomonas palustris (strain BisB18), this protein is UPF0391 membrane protein RPC_3278.